The primary structure comprises 1224 residues: WD repeat-containing protein 11 (1224 aa).

2 WD repeats span residues Lys59 to Glu108 and Glu111 to Lys154. Phosphoserine occurs at positions 205 and 209. Residues Lys354–Asn393 form a WD 3 repeat. Phosphoserine is present on residues Ser402 and Ser406. 6 WD repeats span residues Arg471–Glu510, Asn566–Glu605, Gly708–Ile745, Thr747–Ser787, Asn793–Arg831, and Ser893–Ser940.

In terms of assembly, component of the complex WDR11 composed of C17orf75, FAM91A1 and WDR11; FAM91A1 and WDR11 are required for proper location of the complex. Interacts (via the N-terminal and the central portion of the protein) with EMX1. Interacts with GLI3; the interaction associateS EMX1 with GLI3. Interacts with TBC1D23; this interaction may be indirect and recruits TBC1D23 to AP-1-derived vesicles. Ubiquitous.

Its subcellular location is the cytoplasm. It is found in the cytoskeleton. The protein localises to the cilium basal body. The protein resides in the nucleus. It localises to the cilium axoneme. Its subcellular location is the cytoplasmic vesicle. It is found in the golgi apparatus. The protein localises to the trans-Golgi network. Functionally, involved in the Hedgehog (Hh) signaling pathway, is essential for normal ciliogenesis. Regulates the proteolytic processing of GLI3 and cooperates with the transcription factor EMX1 in the induction of downstream Hh pathway gene expression and gonadotropin-releasing hormone production. WDR11 complex facilitates the tethering of Adaptor protein-1 complex (AP-1)-derived vesicles. WDR11 complex acts together with TBC1D23 to facilitate the golgin-mediated capture of vesicles generated using AP-1. The chain is WD repeat-containing protein 11 (WDR11) from Homo sapiens (Human).